Reading from the N-terminus, the 883-residue chain is MNEQYSALRSNVSMLGKVLGDTIKDALGENILDRVETIRKLSKSSRAGNEANRQELLTTLQNLSNDELLPVARAFSQFLNLANTAEQYHSISPNGEAASNPEVIARTLRKLKDQPNLNEDTIKKAVESLSLELVLTAHPTEITRRTLIHKMVEVNSCLKQLDNKDIADYEHHQLMRRLRQLIAQSWHTDEIRKYRPSPVDEAKWGFAVVENSLWEGVPNYLRELNEQLEANLGYQLPVDFVPVRFTSWMGGDRDGNPNVTADITRHVLLLSRWKATDLFLKDVQVLISELSMVECTDELRALAGAEGAQEPYRYLMKKLRTQLMETQAWLEARLKGQKLPKPAGLITQNEQLWEPLYACYKSLQACGMGIIANGELLDTLRRVKSFGVPLVRIDIRQESTRHTEALGEMTRYLGIGDYESWSEADKQAFLIRELNSKRPLLPRQWEPSEETREVLDTCKVIAEAPRGSIAAYVISMAKTPSDVLAVHLLLKEAGIGFALPVAPLFETLDDLNNANDVMTQLLNIDWYRGFIQGKQMVMIGYSDSAKDAGVMAASWAQYQAQDALIKTCEKAGIELTLFHGRGGSIGRGGAPAHAALLSQPPGSLKGGLRVTEQGEMIRFKYGLPEVTISSLSLYTSAILEANLLPPPEPKAEWRDIMAELSDVSCKMYRGYVRENKDFVPYFRSATPEQELGKLPLGSRPAKRRPTGGVESLRAIPWIFAWTQNRLMLPAWLGAGAALQKVVEGGKQSELEAMCRDWPFFSTRLGMLEMVYSKADLWLAEYYDQRLVKPELWALGTELRKLLAADINVVLAIANDSHLMADLPWIAESIQLRNIYTDPLNVLQAELLHRSRQAEEAGKDPDPRVEQALMVTIAGVAAGMRNTG.

Catalysis depends on residues His138 and Lys546.

This sequence belongs to the PEPCase type 1 family. Mg(2+) is required as a cofactor.

The catalysed reaction is oxaloacetate + phosphate = phosphoenolpyruvate + hydrogencarbonate. Functionally, forms oxaloacetate, a four-carbon dicarboxylic acid source for the tricarboxylic acid cycle. In Klebsiella pneumoniae (strain 342), this protein is Phosphoenolpyruvate carboxylase.